The following is a 396-amino-acid chain: Acetate kinase (396 aa).

A Mg(2+)-binding site is contributed by asparagine 8. Residue lysine 15 participates in ATP binding. Arginine 89 contacts substrate. Aspartate 146 acts as the Proton donor/acceptor in catalysis. ATP is bound by residues 206 to 210 (HIGNG), 283 to 285 (DMR), and 331 to 335 (GIGEN). Residue glutamate 383 participates in Mg(2+) binding.

This sequence belongs to the acetokinase family. As to quaternary structure, homodimer. The cofactor is Mg(2+). Mn(2+) is required as a cofactor.

It is found in the cytoplasm. The catalysed reaction is acetate + ATP = acetyl phosphate + ADP. It functions in the pathway metabolic intermediate biosynthesis; acetyl-CoA biosynthesis; acetyl-CoA from acetate: step 1/2. Catalyzes the formation of acetyl phosphate from acetate and ATP. Can also catalyze the reverse reaction. In Streptococcus gordonii (strain Challis / ATCC 35105 / BCRC 15272 / CH1 / DL1 / V288), this protein is Acetate kinase.